The primary structure comprises 68 residues: Peptide TsPep3 (68 aa).

Positions 1–26 (MKLSCGFLLIFLVLSAMIATFSEVEA) are cleaved as a signal peptide. Cystine bridges form between Cys-30–Cys-38, Cys-33–Cys-54, Cys-37–Cys-47, and Cys-42–Cys-52. A propeptide spanning residues 56–68 (GRSDLNEEFENYQ) is cleaved from the precursor.

In terms of tissue distribution, expressed by the venom gland.

Its subcellular location is the secreted. Probable weak potassium channel blocker. In Tityus serrulatus (Brazilian scorpion), this protein is Peptide TsPep3.